The chain runs to 127 residues: Protein ApaG (127 aa).

An ApaG domain is found at 3 to 127 (ANSPPTIKCN…FRLAIPNILH (125 aa)).

The sequence is that of Protein ApaG from Photobacterium profundum (strain SS9).